The sequence spans 58 residues: MNWKVLEHVPLLLYILAAKTLILCLTFAGVKMYQRKRLEAKQQKLEAERKKQSEKKDN.

A helical transmembrane segment spans residues 10–32 (PLLLYILAAKTLILCLTFAGVKM). Residues 29–58 (GVKMYQRKRLEAKQQKLEAERKKQSEKKDN) are a coiled coil.

In terms of tissue distribution, expressed in heart, spleen, liver, stomach, muscle, lung, testis, skin, PBL and bone marrow.

It localises to the membrane. This is Small integral membrane protein 11 from Homo sapiens (Human).